Reading from the N-terminus, the 897-residue chain is DNA mismatch repair protein MutS (897 aa).

ATP is bound at residue 654 to 661 (GPNMAGKS).

This sequence belongs to the DNA mismatch repair MutS family.

This protein is involved in the repair of mismatches in DNA. It is possible that it carries out the mismatch recognition step. This protein has a weak ATPase activity. The polypeptide is DNA mismatch repair protein MutS (Maricaulis maris (strain MCS10) (Caulobacter maris)).